Reading from the N-terminus, the 612-residue chain is Glutamine--fructose-6-phosphate aminotransferase [isomerizing] (612 aa).

The active-site Nucleophile; for GATase activity is cysteine 2. The region spanning 2-217 (CGIVGGVAER…EGDIARLTRD (216 aa)) is the Glutamine amidotransferase type-2 domain. SIS domains lie at 283–428 (AEAD…VKEQ) and 461–602 (LSEL…VDQP). Lysine 607 acts as the For Fru-6P isomerization activity in catalysis.

Homodimer.

Its subcellular location is the cytoplasm. It carries out the reaction D-fructose 6-phosphate + L-glutamine = D-glucosamine 6-phosphate + L-glutamate. Its function is as follows. Catalyzes the first step in hexosamine metabolism, converting fructose-6P into glucosamine-6P using glutamine as a nitrogen source. This is Glutamine--fructose-6-phosphate aminotransferase [isomerizing] from Acinetobacter baylyi (strain ATCC 33305 / BD413 / ADP1).